Consider the following 416-residue polypeptide: Probable protein phosphatase 2C 49 (416 aa).

Positions 91-411 (RYGVTSVFGR…DNVSVVVVDL (321 aa)) constitute a PPM-type phosphatase domain. Residues Asp-131, Gly-132, and Asp-319 each contribute to the Mn(2+) site. Residues 343 to 360 (PPSPPGCSRPKAVLPPPA) are compositionally biased toward pro residues. A disordered region spans residues 343 to 368 (PPSPPGCSRPKAVLPPPAGASGGGGG). Position 402 (Asp-402) interacts with Mn(2+).

It belongs to the PP2C family. Requires Mg(2+) as cofactor. Mn(2+) serves as cofactor.

The catalysed reaction is O-phospho-L-seryl-[protein] + H2O = L-seryl-[protein] + phosphate. It catalyses the reaction O-phospho-L-threonyl-[protein] + H2O = L-threonyl-[protein] + phosphate. This Oryza sativa subsp. japonica (Rice) protein is Probable protein phosphatase 2C 49.